The sequence spans 207 residues: Cyclic di-AMP synthase CdaS (207 aa).

Residues 13 to 37 (AFKGKIQVYLEQILGDASLILKTLH) adopt a coiled-coil conformation. The DAC domain maps to 63–205 (SFYLQSYIEE…DGVLYPLISP (143 aa)).

It belongs to the adenylate cyclase family. DacB/CdaS subfamily. Forms dimers and probably also hexamers; the dimer may be active while the hexamer may not be active.

The catalysed reaction is 2 ATP = 3',3'-c-di-AMP + 2 diphosphate. Its function is as follows. One of 3 paralogous diadenylate cyclases (DAC) in this bacteria, catalyzing the condensation of 2 ATP molecules into cyclic di-AMP (c-di-AMP). Upon expression in E.coli leads to c-di-AMP synthesis. Overexpression of the hyperactive mutant (L44F) in the absence of c-di-AMP phosphodiesterase GdpP leads to growth defects in log phase (long curly cell filaments) that disappear upon sporulation; spore formation is normal, showing sporulation is insensitive to the excess c-di-AMP. In B.subtilis c-di-AMP is a second messenger that mediates growth, DNA repair and cell wall homeostasis; it is toxic when present in excess. This chain is Cyclic di-AMP synthase CdaS, found in Bacillus subtilis (strain 168).